The following is a 194-amino-acid chain: Crossover junction endodeoxyribonuclease RuvC (194 aa).

Active-site residues include Asp8, Glu72, and Asp144. Positions 8, 72, and 144 each coordinate Mg(2+).

Belongs to the RuvC family. Homodimer which binds Holliday junction (HJ) DNA. The HJ becomes 2-fold symmetrical on binding to RuvC with unstacked arms; it has a different conformation from HJ DNA in complex with RuvA. In the full resolvosome a probable DNA-RuvA(4)-RuvB(12)-RuvC(2) complex forms which resolves the HJ. The cofactor is Mg(2+).

The protein resides in the cytoplasm. The catalysed reaction is Endonucleolytic cleavage at a junction such as a reciprocal single-stranded crossover between two homologous DNA duplexes (Holliday junction).. In terms of biological role, the RuvA-RuvB-RuvC complex processes Holliday junction (HJ) DNA during genetic recombination and DNA repair. Endonuclease that resolves HJ intermediates. Cleaves cruciform DNA by making single-stranded nicks across the HJ at symmetrical positions within the homologous arms, yielding a 5'-phosphate and a 3'-hydroxyl group; requires a central core of homology in the junction. The consensus cleavage sequence is 5'-(A/T)TT(C/G)-3'. Cleavage occurs on the 3'-side of the TT dinucleotide at the point of strand exchange. HJ branch migration catalyzed by RuvA-RuvB allows RuvC to scan DNA until it finds its consensus sequence, where it cleaves and resolves the cruciform DNA. The polypeptide is Crossover junction endodeoxyribonuclease RuvC (Psychrobacter cryohalolentis (strain ATCC BAA-1226 / DSM 17306 / VKM B-2378 / K5)).